The sequence spans 2615 residues: MDGYSSLSSSGNSIAPPRPTNNSVGGGSNSNNYNQREITTPLRGMVPNLGDGSSSQTLLFKNILLLQDVEFFCSILDNFCRSSSTQKITDLINSLIVILDDSFLELLRLFIKQTIDQAKQCSTDESNPLNYQSFYNLINRMAAIYLKSQLGGLMEKTMISQVLNFTPMIQEQIVILANKEANKNNNNVLSANSTPNVTALKTSPAIGSPRIIMGSNYNNSSNNNNIDSIDLNNNSPNMLKNNSPSTFINGSVPQINGGGGSYNLTPISSPTIGSSTPTIITSSSSTTTPTNNNNSNNNTPIISQTIIQNINVEHMKDQISQFSISIINTIFRSIEKFPPTVFQLFEMLYLDIHQVFSPDFCFELMKKIFFTKLICPILANLKSPPNMANGKFFTKTYIEISKVVLDIAFDRDQSRRGSVTTQEQIMHFIKGMIFRNTHSISMTAALNPTLNNQVIPPSIPLPSKEEACNNFINNIRSESSELEESFKRAKDLNTCISFARADRQIYLFSIFKEMLINFKISFNLLNNNQNNNQNINQNNNNNNNQNCNSNTSSPIISSRSGFYTLRNSSTNSSPTNPPLTARGNGSISIGNNNNNNNNNNNNNNNNNNNNNNNNSGGGGGGLNNSSNLLINPWVSSYQNSNISNSDQVQSTRVVQSFSKKWTSDELRPTYLGKSPKKRSWVLDKKNIKTQIINLHIFLDNYSVCRIVTVPMNITFQALANRIHTDSEFSDIQLNKEEYEMVIRYPEESITVLNDEGNQEVICEPELPLWMFDIDTESIIIFRPIKRRSPSSSFNIFLKFIFPSNSSFNSSSSSLPSTPHQKINPMILYINPQSTPQSIIDKFSKLIQPSLLDTAHLGFYLRDIDDESSSPPSIKIPNNNSFAHNKISTMDIIECGPRLSYEFSITVNGTIQNILIDFDNQIDNVANIFYNIYQHLIELSPRSLSSSSSSSSDINNNNNNNTNNNIELTSSGRILTSNGSKHNSNNSNNSSGSSNISEQNLKRSSGIIDSIINGHSNNNSNNYALALLSNSNFLPMFLPGQSKLQDYCFNVGDELILTEKTFVQLVEVLATPRRPPIALSSSLSQSNAFNSNVYNSNAYNSNVYNSNPYLSNYNGLSSQSLNSMNVDGAGGVGGFNGEQNQQQNKVIARVRVIWAGSNSSVDRLQSFINTSQNVNTTYSGSTMALNDVLSNPNQLLSTPLSRPLLSTVIAQDNTYICTSKNDYCMNNQVKLCIVGEESQEKLSFYNSLRKNYSQNGLLSSGGGRGGGFFGSNFIPSSTSNVNEVSSIDGVLHTSELVVGSAEIDQITLKTFYISGNEQYQVVHPLFISPQSLFIITYNPMNINSTMINYWLEIIQTKAQGSTVYLVGLSNTSIDEKKFVSFKSEYHRLFRFNNINSYSNISLKNSKQIKQLVQRLQNNAMMKQYHYKIPLSYSILKSQCQESVKEAYARNKMPLSSIPLIKNIARIFSIEPRDSEAAIKYLYEIGEVLYYRYEANDQLLNELVFLDSMWMSKLISAVLALKTQNGMTVVDQITQAWASLFPHCKTSSLLFLLEKFELVYISAEDSSVIIPQLFGGERPMVMRDLWSPTAHANNEYLRIYEFQFLPKGFFSRLSVRVLQHYDPLCIWQNGMVLQPAGQLWGGAAKSFDSQCLIEYDSVNFILKVSIRDDNKQQQLLKSIVDLVSSFILWYFPGRLSNVRVACTHCTNQHIENPTMYTLDYLENQASLGQTNVICKAQLGGIIHETLSPRTTKIDIYSLAFEVTFNSNKFSVIPYETLKFGPQLGSGSYANVYRGIWNGSEVAIKVLNFDDGHANTTEKYREFRNEAHITGELRHANTVSLMGVSLSPFCLVTELLQYGDLAKFIRNTAETFSWGTVLKLAIDVAKGMNFLHSCKPMIVHRDLKSANILLGGSSMDNLVAKVGDFGLSIKPIGKEVKGRKVWNWRWLAPECMGDGQYTEKIDIYSYAIVLWEIITRDLPFEEYVDQLKWNSIIEDKIMKGLRPTIPNECPPDMKQLITDCWSGDPKKRPSFNSILERLSTMQKTFNLNERLEFCKQLPPINEDQINQQQQQPPPQSQAAQQQQPSTSTPPLSQHQQKLSISNLQLNNLLNNHNSNGSNSSIQSSLSHNNNNLNNNINNNNNNNNNNNNNSSGGSSGVSHSGSSGNNFVIPIITAIANGGIGSGGNQHQQNGSSTPHSNSQSNSGSSSVYESGDGSLSSAGSFKILRYEMVLPVAFTSTIHSLYPVQNNKNEVFVWCGMGDGSVCVINSATRQIVSTSRIADSSRILGFSLIRKCTPSSSSVTLTSRSSLNLSSLASGSTPSPYSSGGSGGSLGSSYQPICPTIEEDSHIWAFYNEGILCFEAKSFKLLKTIKTNFITSLVDEGESVWSNCKEKTSCIKVISKSKLKTKKLMNVKTLDAQITTILIHHSSVGAVGASRVWLGTDRGMIFILEYPSMAPIAHHESHGGALIHTIKRMDRFVITCSERVICIFDESGIIKKRLDGLASRVLSLLILDTYIIGACYDSTILVWDSKQNFRMVQSLKKKHTDAISSLAFALSPQGKPQLWVGGWDKKITTYSFFEDLESSLSIALQTPPPSSYPTLATPRLGLVNVSKSKLFG.

A compositionally biased stretch (low complexity) spans 1–13; sequence MDGYSSLSSSGNS. Disordered stretches follow at residues 1–35, 275–297, 533–623, and 946–998; these read MDGYSSLSSSGNSIAPPRPTNNSVGGGSNSNNYNQ, STPTIITSSSSTTTPTNNNNSNN, QNIN…GGLN, and SSSS…ISEQ. 3 stretches are compositionally biased toward low complexity: residues 533-560, 567-614, and 946-996; these read QNINQNNNNNNNQNCNSNTSSPIISSRS, NSST…NNNN, and SSSS…SNIS. Residues 1441 to 1631 enclose the COR domain; sequence SVKEAYARNK…LCIWQNGMVL (191 aa). The region spanning 1775–2042 is the Protein kinase domain; sequence LKFGPQLGSG…ERLSTMQKTF (268 aa). Residues 1781 to 1789 and Lys1802 each bind ATP; that span reads LGSGSYANV. The active-site Proton acceptor is Asp1899. Disordered regions lie at residues 2061–2158 and 2176–2209; these read QINQ…SHSG and GIGSGGNQHQQNGSSTPHSNSQSNSGSSSVYESG. Low complexity-rich tracts occupy residues 2073-2158 and 2182-2209; these read SQAA…SHSG and NQHQQNGSSTPHSNSQSNSGSSSVYESG. 2 WD repeats span residues 2491–2527 and 2533–2574; these read GIIKKRLDGLASRVLSLLILDTYIIGACYDSTILVWD and RMVQ…TTYS.

This sequence belongs to the protein kinase superfamily. TKL Ser/Thr protein kinase family. ROCO subfamily.

It carries out the reaction L-seryl-[protein] + ATP = O-phospho-L-seryl-[protein] + ADP + H(+). It catalyses the reaction L-threonyl-[protein] + ATP = O-phospho-L-threonyl-[protein] + ADP + H(+). The protein is Probable serine/threonine-protein kinase roco7 (roco7) of Dictyostelium discoideum (Social amoeba).